We begin with the raw amino-acid sequence, 355 residues long: Olfactory receptor 1I1 (355 aa).

The Extracellular segment spans residues 1 to 25; that stretch reads MEPEKQTEISEFFLQGLSEKPEHQT. Residues 26 to 49 form a helical membrane-spanning segment; that stretch reads LLFTMFLSTYLVTIIGNALIILAI. Residues 50-57 lie on the Cytoplasmic side of the membrane; sequence ITDSHLHT. A helical membrane pass occupies residues 58–79; sequence PMYFFLFNLSLVDTLLSSTTVP. Residues 80–100 lie on the Extracellular side of the membrane; sequence KMLANIQAQSRAIPFVGCLTQ. The chain crosses the membrane as a helical span at residues 101 to 120; the sequence is MYAFHLFGTMDSFLLAVMAI. Topologically, residues 121–139 are cytoplasmic; it reads DRFVAIVHPQRYLVLMCSP. Residues 140-158 form a helical membrane-spanning segment; that stretch reads VCGLLLGASWMITNLQSLI. At 159–195 the chain is on the extracellular side; that stretch reads HTCLMAQLTFCAGSEISHFFCDLMPLLKLSGSDTHTN. Residues 196–219 traverse the membrane as a helical segment; sequence ELVIFAFGIVVGTSPFSCILLSYI. The Cytoplasmic segment spans residues 220 to 236; the sequence is RIFWTVFKIPSTRGKWK. A helical membrane pass occupies residues 237-259; the sequence is AFSTCGLHLTVVSLSYGTIFAVY. Residues 260 to 272 are Extracellular-facing; sequence LQPTSPSSSQKDK. A helical membrane pass occupies residues 273–292; that stretch reads AAALMCGVFIPMLNPFIYSI. The Cytoplasmic portion of the chain corresponds to 293–355; the sequence is RNKDMKAALG…QSLAGNRDME (63 aa).

Belongs to the G-protein coupled receptor 1 family.

It is found in the cell membrane. Odorant receptor. The sequence is that of Olfactory receptor 1I1 (OR1I1) from Homo sapiens (Human).